A 177-amino-acid polypeptide reads, in one-letter code: ATP synthase subunit delta (177 aa).

Belongs to the ATPase delta chain family. As to quaternary structure, F-type ATPases have 2 components, F(1) - the catalytic core - and F(0) - the membrane proton channel. F(1) has five subunits: alpha(3), beta(3), gamma(1), delta(1), epsilon(1). F(0) has three main subunits: a(1), b(2) and c(10-14). The alpha and beta chains form an alternating ring which encloses part of the gamma chain. F(1) is attached to F(0) by a central stalk formed by the gamma and epsilon chains, while a peripheral stalk is formed by the delta and b chains.

The protein localises to the cell inner membrane. Functionally, f(1)F(0) ATP synthase produces ATP from ADP in the presence of a proton or sodium gradient. F-type ATPases consist of two structural domains, F(1) containing the extramembraneous catalytic core and F(0) containing the membrane proton channel, linked together by a central stalk and a peripheral stalk. During catalysis, ATP synthesis in the catalytic domain of F(1) is coupled via a rotary mechanism of the central stalk subunits to proton translocation. Its function is as follows. This protein is part of the stalk that links CF(0) to CF(1). It either transmits conformational changes from CF(0) to CF(1) or is implicated in proton conduction. The polypeptide is ATP synthase subunit delta (Leptothrix cholodnii (strain ATCC 51168 / LMG 8142 / SP-6) (Leptothrix discophora (strain SP-6))).